Reading from the N-terminus, the 187-residue chain is Ion-translocating oxidoreductase complex subunit B (187 aa).

A hydrophobic region spans residues 1–26 (MTHILFAVLVLALLALAFGIILGFAA). Residues 32-90 (EADPIVDQLDALLPQTQCGQCGYPGCKPYAEALANGDQINKCVPGGDATMRKIADLMGV) form the 4Fe-4S domain. Cys-49, Cys-52, Cys-57, Cys-73, Cys-115, Cys-118, Cys-121, Cys-125, Cys-145, Cys-148, Cys-151, and Cys-155 together coordinate [4Fe-4S] cluster. 4Fe-4S ferredoxin-type domains follow at residues 106–135 (KVAF…GATK) and 136–165 (AMHT…MIPV).

It belongs to the 4Fe4S bacterial-type ferredoxin family. RnfB subfamily. As to quaternary structure, the complex is composed of six subunits: RnfA, RnfB, RnfC, RnfD, RnfE and RnfG. Requires [4Fe-4S] cluster as cofactor.

The protein resides in the cell inner membrane. In terms of biological role, part of a membrane-bound complex that couples electron transfer with translocation of ions across the membrane. This is Ion-translocating oxidoreductase complex subunit B from Aeromonas salmonicida (strain A449).